We begin with the raw amino-acid sequence, 155 residues long: Secreted RxLR effector protein RXLR-C301 (155 aa).

The N-terminal stretch at 1–24 (MRLYALSVSLLAAITLLACVIASA) is a signal peptide. Residues 34–64 (RRLSQDVSETEITELSESKKPTAQDIDNEER) carry the RxLR-dEER motif.

It belongs to the RxLR effector family.

The protein localises to the secreted. Its subcellular location is the host cell membrane. In terms of biological role, secreted effector that does not suppress pattern-triggered immunity (PTI) in plant host. The chain is Secreted RxLR effector protein RXLR-C301 from Plasmopara halstedii (Downy mildew of sunflower).